Here is a 112-residue protein sequence, read N- to C-terminus: MTGKTVTRADLAESVFRKVGLSRTESAELVETVIDEICNAIVRGETVKLSSFATFQVRDKNERIGRNPKTGEEVPISPRRVMTFKASNVLKTRILKAHVTRKVKLKPQNPTP.

This sequence belongs to the bacterial histone-like protein family. Heterodimer of an alpha and a beta chain.

Its function is as follows. This protein is one of the two subunits of integration host factor, a specific DNA-binding protein that functions in genetic recombination as well as in transcriptional and translational control. The polypeptide is Integration host factor subunit alpha (Rhizobium etli (strain ATCC 51251 / DSM 11541 / JCM 21823 / NBRC 15573 / CFN 42)).